The chain runs to 602 residues: Aspartate--tRNA(Asp/Asn) ligase (602 aa).

Glu-176 serves as a coordination point for L-aspartate. Residues 200-203 (QQFK) form an aspartate region. The L-aspartate site is built by Arg-222 and His-452. 222–224 (RDE) is a binding site for ATP. Glu-490 is an ATP binding site. Arg-497 provides a ligand contact to L-aspartate. Residue 542–545 (GIDR) participates in ATP binding.

The protein belongs to the class-II aminoacyl-tRNA synthetase family. Type 1 subfamily. In terms of assembly, homodimer.

The protein localises to the cytoplasm. The catalysed reaction is tRNA(Asx) + L-aspartate + ATP = L-aspartyl-tRNA(Asx) + AMP + diphosphate. Its function is as follows. Aspartyl-tRNA synthetase with relaxed tRNA specificity since it is able to aspartylate not only its cognate tRNA(Asp) but also tRNA(Asn). Reaction proceeds in two steps: L-aspartate is first activated by ATP to form Asp-AMP and then transferred to the acceptor end of tRNA(Asp/Asn). This chain is Aspartate--tRNA(Asp/Asn) ligase, found in Rickettsia bellii (strain OSU 85-389).